A 957-amino-acid polypeptide reads, in one-letter code: Glycine dehydrogenase (decarboxylating) (957 aa).

Lysine 708 carries the post-translational modification N6-(pyridoxal phosphate)lysine.

The protein belongs to the GcvP family. The glycine cleavage system is composed of four proteins: P, T, L and H. Pyridoxal 5'-phosphate is required as a cofactor.

It catalyses the reaction N(6)-[(R)-lipoyl]-L-lysyl-[glycine-cleavage complex H protein] + glycine + H(+) = N(6)-[(R)-S(8)-aminomethyldihydrolipoyl]-L-lysyl-[glycine-cleavage complex H protein] + CO2. The glycine cleavage system catalyzes the degradation of glycine. The P protein binds the alpha-amino group of glycine through its pyridoxal phosphate cofactor; CO(2) is released and the remaining methylamine moiety is then transferred to the lipoamide cofactor of the H protein. The chain is Glycine dehydrogenase (decarboxylating) from Salmonella typhi.